Consider the following 1960-residue polypeptide: Myosin-9 (1960 aa).

N-acetylalanine is present on Ala-2. The tract at residues 2-838 (AQQAADKYLY…RLFTKVKPLL (837 aa)) is mediates interaction with LIMCH1. Lys-8 carries the post-translational modification N6-acetyllysine. Tyr-11 is modified (phosphotyrosine). The region spanning 27–77 (AAKKLVWVPSDKSGFEPASLKEEVGEEAIVELVENGKKVKVNKDDIQKMNP) is the Myosin N-terminal SH3-like domain. Positions 81 to 776 (SKVEDMAELT…VLAHLEEERD (696 aa)) constitute a Myosin motor domain. Position 102 is an N6-acetyllysine (Lys-102). ATP is bound at residue 174-181 (GESGAGKT). Residues Lys-299, Lys-435, and Lys-613 each carry the N6-acetyllysine modification. At Ser-628 the chain carries Phosphoserine. The segment at 654 to 676 (LAKLMATLRNTNPNFVRCIIPNH) is actin-binding. Tyr-754 carries the post-translational modification Phosphotyrosine. The IQ domain maps to 779–808 (ITDVIIGFQACCRGYLARKAFAKRQQQLTA). Residues 837–1926 (LLQVSRQEEE…LKNKLRRGDL (1090 aa)) are a coiled coil. N6-succinyllysine is present on Lys-850. Lys-860, Lys-975, and Lys-1024 each carry N6-acetyllysine. The segment covering 1035–1055 (RLRREEKQRQELEKTRRKLEG) has biased composition (basic and acidic residues). The segment at 1035–1057 (RLRREEKQRQELEKTRRKLEGDS) is disordered. At Ser-1114 the chain carries Phosphoserine. Residues 1118-1137 (EDLESERASRNKAEKQKRDL) are disordered. Residues 1122-1137 (SERASRNKAEKQKRDL) are compositionally biased toward basic and acidic residues. Residues Lys-1234, Lys-1249, Lys-1357, Lys-1392, Lys-1404, Lys-1410, Lys-1459, and Lys-1638 each carry the N6-acetyllysine modification. An N6-succinyllysine modification is found at Lys-1669. Position 1714 is a phosphoserine (Ser-1714). N6-acetyllysine is present on residues Lys-1793, Lys-1802, and Lys-1845. The segment at 1877 to 1960 (RQLEEAEEEA…ADGAEAKPAE (84 aa)) is disordered. Position 1923 is an omega-N-methylarginine (Arg-1923). Phosphoserine is present on Ser-1943. A compositionally biased stretch (basic and acidic residues) spans 1948 to 1960 (DGKADGAEAKPAE).

It belongs to the TRAFAC class myosin-kinesin ATPase superfamily. Myosin family. In terms of assembly, myosin is a hexameric protein that consists of 2 heavy chain subunits (MHC), 2 alkali light chain subunits (MLC) and 2 regulatory light chain subunits (MLC-2). Interacts with RASIP1. Interacts with DDR1. Interacts with PDLIM2. Interacts with SVIL. Interacts with HTRA3. Interacts with Myo7a. Interacts with CFAP95. Interacts with LIMCH1; independently of the integration of MYH9 into the myosin complex. Interacts with RAB3A. Interacts with ZBED4. Interacts with S100A4; this interaction increases cell motility. (Microbial infection) Interacts with herpes simplex virus 1/HHV-1 envelope glycoprotein B. Post-translationally, ISGylated. In terms of processing, ubiquitination. As to expression, in the kidney, expressed in the glomeruli. Also expressed in leukocytes.

It is found in the cytoplasm. Its subcellular location is the cytoskeleton. The protein resides in the cell cortex. It localises to the cytoplasmic vesicle. The protein localises to the secretory vesicle. It is found in the cortical granule. Its subcellular location is the cell membrane. Its function is as follows. Cellular myosin that appears to play a role in cytokinesis, cell shape, and specialized functions such as secretion and capping. Required for cortical actin clearance prior to oocyte exocytosis. Promotes cell motility in conjunction with S100A4. During cell spreading, plays an important role in cytoskeleton reorganization, focal contact formation (in the margins but not the central part of spreading cells), and lamellipodial retraction; this function is mechanically antagonized by MYH10. In terms of biological role, (Microbial infection) Acts as a receptor for herpes simplex virus 1/HHV-1 envelope glycoprotein B. The polypeptide is Myosin-9 (MYH9) (Homo sapiens (Human)).